A 413-amino-acid chain; its full sequence is Serine/threonine transporter SstT (413 aa).

10 helical membrane passes run 18–38, 52–72, 86–106, 119–139, 145–165, 196–216, 221–241, 292–312, 320–340, and 360–380; these read LSLVTQILIGLIAGIALALFA, FVSALKAVAPILVFVLVMASI, ILFLYLLGTFAAAVVAVIASM, IAVSAPGGISEVLQSLLLSVV, ALMNANFIGILAWAIGMGVAI, LGIFGLVASTLATSGFGALIG, LAVLLGCMLFVALVMNPLIVF, VSIPLGATINMAGAAITITVL, LGIAVDIPTAILLSVVAAICA, and LFGIPSEIAMQVVAVGFIIGV.

The protein belongs to the dicarboxylate/amino acid:cation symporter (DAACS) (TC 2.A.23) family.

Its subcellular location is the cell inner membrane. The enzyme catalyses L-serine(in) + Na(+)(in) = L-serine(out) + Na(+)(out). The catalysed reaction is L-threonine(in) + Na(+)(in) = L-threonine(out) + Na(+)(out). In terms of biological role, involved in the import of serine and threonine into the cell, with the concomitant import of sodium (symport system). In Pseudomonas fluorescens (strain Pf0-1), this protein is Serine/threonine transporter SstT.